Reading from the N-terminus, the 620-residue chain is MGKVIGIDLGTTNSAMAVYEGNEAKIIANKEGKNTTPSIVAFTDKGEILVGESAKRQAVTNPEKTIYSIKRIMGLMFNEDKAKEAEKRLPYKIVDRNGACAIEISGKVYTPQEISAKILMKLKEDAESYLGESVTEAVITVPAYFNDSQRKATKEAGTIAGLNVLRIINEPTSAALAYGLDKKESEKIMVYDLGGGTFDVTVLETGDNVVEVLATGGDAFLGGDDFDNRVIDFLASEFKSETGIEIKNDVMALQRLKEAAENAKKELSSAMETEINLPFITADATGPKHLVKKLTRAKFESLTEDLVEETISKIESVIKDAGLTKNEISEVVMVGGSTRIPKVQERVKAFINKDLNKSVNPDEVVAVGASIQGGVLKGDVKDVLLLDVTPLSLGIETLGGVMTKVIDRGTTIPAKKSQVFSTAEDNQPAVSIMVLQGERELARDNKSLGKFDLQGIAPAPRGVPQIEVTFDIDANGILTVSAQDKNTGKSQEIKISGSSGLSDSEIEKMVKDAELHKEEDARKKEVIEARNHADSLAHQTQKSLDEHKTNLNENDANEIQNAINALKECVKNDNATKAELEDKTKLLAQAAQKLGEAMANKNNAEQPKKKDDDVIDAEVE.

The residue at position 197 (Thr-197) is a Phosphothreonine; by autocatalysis. The interval 597–620 (AMANKNNAEQPKKKDDDVIDAEVE) is disordered.

It belongs to the heat shock protein 70 family.

Functionally, acts as a chaperone. In Helicobacter pylori (strain Shi470), this protein is Chaperone protein DnaK.